Reading from the N-terminus, the 210-residue chain is Large ribosomal subunit protein uL4 (210 aa).

A disordered region spans residues 46–77 (QGTHKSKERGEIAGSTKKIKKQKGTGTARAGS).

It belongs to the universal ribosomal protein uL4 family. In terms of assembly, part of the 50S ribosomal subunit.

Functionally, one of the primary rRNA binding proteins, this protein initially binds near the 5'-end of the 23S rRNA. It is important during the early stages of 50S assembly. It makes multiple contacts with different domains of the 23S rRNA in the assembled 50S subunit and ribosome. Its function is as follows. Forms part of the polypeptide exit tunnel. The polypeptide is Large ribosomal subunit protein uL4 (Amoebophilus asiaticus (strain 5a2)).